The sequence spans 272 residues: Energy-coupling factor transporter ATP-binding protein EcfA1 (272 aa).

The ABC transporter domain maps to Ile-2–Asp-237. Gly-37–Ser-44 contacts ATP.

It belongs to the ABC transporter superfamily. Energy-coupling factor EcfA family. In terms of assembly, forms a stable energy-coupling factor (ECF) transporter complex composed of 2 membrane-embedded substrate-binding proteins (S component), 2 ATP-binding proteins (A component) and 2 transmembrane proteins (T component).

Its subcellular location is the cell membrane. Functionally, ATP-binding (A) component of a common energy-coupling factor (ECF) ABC-transporter complex. Unlike classic ABC transporters this ECF transporter provides the energy necessary to transport a number of different substrates. In Mesomycoplasma hyopneumoniae (strain 7448) (Mycoplasma hyopneumoniae), this protein is Energy-coupling factor transporter ATP-binding protein EcfA1.